Reading from the N-terminus, the 166-residue chain is Small ribosomal subunit protein uS5 (166 aa).

The region spanning 12 to 75 (YIEKLVQVNR…EAARRNMIQV (64 aa)) is the S5 DRBM domain.

Belongs to the universal ribosomal protein uS5 family. As to quaternary structure, part of the 30S ribosomal subunit. Contacts proteins S4 and S8.

In terms of biological role, with S4 and S12 plays an important role in translational accuracy. Located at the back of the 30S subunit body where it stabilizes the conformation of the head with respect to the body. The protein is Small ribosomal subunit protein uS5 of Ectopseudomonas mendocina (strain ymp) (Pseudomonas mendocina).